Here is a 331-residue protein sequence, read N- to C-terminus: Phosphoribosylformylglycinamidine cyclo-ligase (331 aa).

This sequence belongs to the AIR synthase family.

It localises to the cytoplasm. The catalysed reaction is 2-formamido-N(1)-(5-O-phospho-beta-D-ribosyl)acetamidine + ATP = 5-amino-1-(5-phospho-beta-D-ribosyl)imidazole + ADP + phosphate + H(+). Its pathway is purine metabolism; IMP biosynthesis via de novo pathway; 5-amino-1-(5-phospho-D-ribosyl)imidazole from N(2)-formyl-N(1)-(5-phospho-D-ribosyl)glycinamide: step 2/2. The chain is Phosphoribosylformylglycinamidine cyclo-ligase from Clostridium botulinum (strain 657 / Type Ba4).